Consider the following 297-residue polypeptide: Formylmethanofuran--tetrahydromethanopterin formyltransferase (297 aa).

The protein belongs to the FTR family. In terms of assembly, homotetramer.

It localises to the cytoplasm. It catalyses the reaction N-formylmethanofuran + 5,6,7,8-tetrahydromethanopterin + H(+) = N(5)-formyl-5,6,7,8-tetrahydromethanopterin + methanofuran. The protein operates within one-carbon metabolism; methanogenesis from CO(2); 5,10-methenyl-5,6,7,8-tetrahydromethanopterin from CO(2): step 2/3. Functionally, catalyzes the reversible transfer of a formyl group from formylmethanofuran (formyl-MFR) to tetrahydromethanopterin (H(4)MPT) to produce 5-formyl tetrahydromethanopterin (5-formyl-H(4)MPT) and methanofuran (MFR). The chain is Formylmethanofuran--tetrahydromethanopterin formyltransferase from Methanosarcina acetivorans (strain ATCC 35395 / DSM 2834 / JCM 12185 / C2A).